A 254-amino-acid polypeptide reads, in one-letter code: Small ribosomal subunit protein mS40 (254 aa).

The transit peptide at 1–33 (MAAPLRHTLLKLVPTLLRSSYVAQVPLQTLCTR) directs the protein to the mitochondrion. Serine 47 carries the post-translational modification Phosphoserine. Residues 218–254 (YQGNLLEESGPPPESMPEMPTTPPAESSIEQPGSQSA) form a disordered region. Pro residues predominate over residues 227–240 (GPPPESMPEMPTTP).

This sequence belongs to the bacterial ribosomal protein bS18 family. Mitochondrion-specific ribosomal protein mS40 subfamily. As to quaternary structure, component of the mitochondrial ribosome small subunit (28S) which comprises a 12S rRNA and about 30 distinct proteins.

It is found in the mitochondrion. This is Small ribosomal subunit protein mS40 (Mrps18b) from Mus musculus (Mouse).